The chain runs to 382 residues: Nonsense-mediated mRNA decay factor SMG9 (382 aa).

Residues 1–66 (MKKVEILKTP…PDSSVSKSSG (66 aa)) are disordered.

The protein belongs to the SMG9 family.

In terms of biological role, involved in nonsense-mediated decay (NMD) of mRNAs containing premature stop codons. Probable component of kinase complex containing smg-1 and recruited to stalled ribosomes. The sequence is that of Nonsense-mediated mRNA decay factor SMG9 (smg-9) from Caenorhabditis briggsae.